Here is a 379-residue protein sequence, read N- to C-terminus: Carbamoyl phosphate synthase small chain (379 aa).

The segment at 1 to 187 is CPSase; the sequence is MNFTPALLAL…GSGHAPAPAS (187 aa). L-glutamine is bound by residues serine 48, glycine 239, and glycine 241. One can recognise a Glutamine amidotransferase type-1 domain in the interval 191–378; the sequence is KVVAYDFGVK…IELMKPQGVR (188 aa). Cysteine 267 (nucleophile) is an active-site residue. L-glutamine contacts are provided by leucine 268, glutamine 271, asparagine 309, glycine 311, and phenylalanine 312. Residues histidine 351 and glutamate 353 contribute to the active site.

The protein belongs to the CarA family. As to quaternary structure, composed of two chains; the small (or glutamine) chain promotes the hydrolysis of glutamine to ammonia, which is used by the large (or ammonia) chain to synthesize carbamoyl phosphate. Tetramer of heterodimers (alpha,beta)4.

The enzyme catalyses hydrogencarbonate + L-glutamine + 2 ATP + H2O = carbamoyl phosphate + L-glutamate + 2 ADP + phosphate + 2 H(+). It carries out the reaction L-glutamine + H2O = L-glutamate + NH4(+). It functions in the pathway amino-acid biosynthesis; L-arginine biosynthesis; carbamoyl phosphate from bicarbonate: step 1/1. Its pathway is pyrimidine metabolism; UMP biosynthesis via de novo pathway; (S)-dihydroorotate from bicarbonate: step 1/3. Its function is as follows. Small subunit of the glutamine-dependent carbamoyl phosphate synthetase (CPSase). CPSase catalyzes the formation of carbamoyl phosphate from the ammonia moiety of glutamine, carbonate, and phosphate donated by ATP, constituting the first step of 2 biosynthetic pathways, one leading to arginine and/or urea and the other to pyrimidine nucleotides. The small subunit (glutamine amidotransferase) binds and cleaves glutamine to supply the large subunit with the substrate ammonia. This chain is Carbamoyl phosphate synthase small chain, found in Thioalkalivibrio sulfidiphilus (strain HL-EbGR7).